A 1487-amino-acid chain; its full sequence is MIERGKYQSLTMVNWNGFFARTFDIDGLVTTLSGGNGAGKSTTMAAFITALIPDQSLLHFRNTTEAGSSQASRDKGLYGKLQPGACYAALDVVNSRNQRLLFAVKLQQVAGRDKKVDIKPFVIQGLPSHVKPTDVLIESVSATQARVRQINEVKESVAQYEGVQFKSFSSIVDYHAQMFEFGVIPKKLRNSSDRSKFYRLIEASLYGGISSAITRSLRDYLLPQNGGVKKAFQDMESALRENRMTLEAIKTTQADRDLFKHLITESTNYVAADYMRHANERHKKLEQSLSLRSELFSSRETLIEQNRLLNQVQQELEMLVESESALEQDYQGASDHLQLVQNALRQQEKIERYQEDLEELNERLEEQSMVVEEAQERVLMAEEQSTVAENEVDSLKTQLADYQQALDVQQTRALQYQQAVQALEKAKVLLSDSTLTAESAQALVAQLTQSEAEQTQALLALKHKLDMSSAAAQQFENALKLVHSIAGQVERAEASRHAKAAIQQARSAQQVVQNENQWRAQHRDLERSLNQQNQAQALVAEYQKAHQVTLDDEVMFEQERERHHAQLDSLEIALEENRELRSEQRRQEQDLQSDITQLQAIAPKWIAANDALEKLREQSGAELADSQSVMSQMQQVLEQEKQLSQAKDKLAERRSQLESEIERLASPGGSNDPRLKGLADTLGGVLLSEIYDDITIDDAPYFSAMYGPARHAIVVSDLSGIEEKLVELDDCPEDLYIIEGDVDAFDDSSIKAEELEGAVCVRLNDRQMRYSRFPVIPLFGRAAREQRLELLRSEREEVVEKHAKAAFDAQKMQRLFQAFNQFVAEHIQVAFAADPEQALVIARDKRNQLTRTLAELEAKELQMRSQIQNSKQALTMLDKLAPMMAVISDDTIGERFAELEEKIAQLADAKQFLGAHAKAVEQLESQLAVLDADPEQFDALEAQYQSADSQLQALKKQIFALSDLVERRHYFAYADSVDLLSKSSELSEQLKAKLVEAERARSRYRDELKQQQEQMNQYNQVLASLKSSYQAKLETVQEFKQELAEFGVSADEGALERAIRRRDELHERLHTSRSRKSEYERTLTSTELGMKELAKRLKKVQKEYVELRTFVVAAKAGWCSVLRLARENDVERRLHKRELAYLSAGELRSMSDKSLGALRLAVANNDDLRDALRLSEDNARPERKVLFYIAVYQHLRERIRQDIIHTDDPVEAIEEMEVELARLTEELTMRENRLAISSESVASIIKKTIQREQNRIRMLNQGLSNISFGQVKGVRLNVKVRESHEVLLNGLATQQEQHKDLFETARYTFSEAMAKLFQRVNPHIDMGQRSPQVLGEELLDYRNYLELSIEVNRGSDGWLQAESGALSTGEAIGTGQSILLMVVQSWEEESRRLRSKDIVPCRLLFLDEAARLDAKSISTLFELCDRLDMQLLIAAPENISPEKGTTYKLVRKVFKDHEHVHVVGLRGFGQEQKPKSEAQQMIEEFEA.

34–41 is an ATP binding site; sequence GGNGAGKS. Coiled-coil stretches lie at residues 297–426, 460–666, 781–806, 836–1111, and 1210–1266; these read SSRE…LEKA, ALKH…RLAS, RAAR…AKAA, EQAL…RTFV, and VEAI…LSNI. Residues 667–784 form a flexible hinge region; it reads PGGSNDPRLK…VIPLFGRAAR (118 aa).

The protein belongs to the SMC family. MukB subfamily. In terms of assembly, homodimerization via its hinge domain. Binds to DNA via its C-terminal region. Interacts, and probably forms a ternary complex, with MukE and MukF via its C-terminal region. The complex formation is stimulated by calcium or magnesium. Interacts with tubulin-related protein FtsZ.

The protein resides in the cytoplasm. Its subcellular location is the nucleoid. Its function is as follows. Plays a central role in chromosome condensation, segregation and cell cycle progression. Functions as a homodimer, which is essential for chromosome partition. Involved in negative DNA supercoiling in vivo, and by this means organize and compact chromosomes. May achieve or facilitate chromosome segregation by condensation DNA from both sides of a centrally located replisome during cell division. The sequence is that of Chromosome partition protein MukB from Vibrio vulnificus (strain CMCP6).